The chain runs to 200 residues: FMN-dependent NADH:quinone oxidoreductase 2 (200 aa).

Position 135-138 (135-138 (SRGG)) interacts with FMN.

The protein belongs to the azoreductase type 1 family. In terms of assembly, homodimer. It depends on FMN as a cofactor.

The enzyme catalyses 2 a quinone + NADH + H(+) = 2 a 1,4-benzosemiquinone + NAD(+). The catalysed reaction is N,N-dimethyl-1,4-phenylenediamine + anthranilate + 2 NAD(+) = 2-(4-dimethylaminophenyl)diazenylbenzoate + 2 NADH + 2 H(+). Quinone reductase that provides resistance to thiol-specific stress caused by electrophilic quinones. In terms of biological role, also exhibits azoreductase activity. Catalyzes the reductive cleavage of the azo bond in aromatic azo compounds to the corresponding amines. In Clostridium acetobutylicum (strain ATCC 824 / DSM 792 / JCM 1419 / IAM 19013 / LMG 5710 / NBRC 13948 / NRRL B-527 / VKM B-1787 / 2291 / W), this protein is FMN-dependent NADH:quinone oxidoreductase 2.